Reading from the N-terminus, the 174-residue chain is MSSAAADHWAWLLVLSFVFGCNVLRILLPSFSSFMSRVLQKDAEQESQMRAEIQDMKQELSTVNMMDEFARYARLERKINKMTDKLKTHVKARTAQLAKIKWVISVAFYVLQAALMISLIWKYYSVPVAVVPSKWITPLDRLVAFPTRVAGGVGITCWILVCNKVVAIVLHPFS.

The Lumenal portion of the chain corresponds to 1–8 (MSSAAADH). The chain crosses the membrane as a helical span at residues 9–29 (WAWLLVLSFVFGCNVLRILLP). The Cytoplasmic portion of the chain corresponds to 30 to 99 (SFSSFMSRVL…VKARTAQLAK (70 aa)). Residues 39-94 (LQKDAEQESQMRAEIQDMKQELSTVNMMDEFARYARLERKINKMTDKLKTHVKART) are a coiled coil. The interval 39–97 (LQKDAEQESQMRAEIQDMKQELSTVNMMDEFARYARLERKINKMTDKLKTHVKARTAQL) is interaction with GET3/TRC40. A helical transmembrane segment spans residues 100-120 (IKWVISVAFYVLQAALMISLI). Residues 121–148 (WKYYSVPVAVVPSKWITPLDRLVAFPTR) lie on the Lumenal side of the membrane. The helical transmembrane segment at 149–169 (VAGGVGITCWILVCNKVVAIV) threads the bilayer. At 170–174 (LHPFS) the chain is on the cytoplasmic side.

This sequence belongs to the WRB/GET1 family. In terms of assembly, component of the Golgi to ER traffic (GET) complex, which is composed of GET1/WRB, CAMLG/GET2 and GET3/TRC40. Within the complex, GET1 and CAMLG form a heterotetramer which is stabilized by phosphatidylinositol binding and which binds to the GET3 homodimer. Interacts with CAMLG (via C-terminus). GET3 shows a higher affinity for CAMLG than for GET1.

The protein resides in the endoplasmic reticulum membrane. Its function is as follows. Required for the post-translational delivery of tail-anchored (TA) proteins to the endoplasmic reticulum (ER). Together with CAMLG/GET2, acts as a membrane receptor for soluble GET3/TRC40, which recognizes and selectively binds the transmembrane domain of TA proteins in the cytosol. Required to ensure correct topology and ER insertion of CAMLG. This chain is Guided entry of tail-anchored proteins factor 1, found in Homo sapiens (Human).